The chain runs to 486 residues: Glutamyl-tRNA(Gln) amidotransferase subunit A (486 aa).

Active-site charge relay system residues include Lys-79 and Ser-154. Ser-178 (acyl-ester intermediate) is an active-site residue.

It belongs to the amidase family. GatA subfamily. Heterotrimer of A, B and C subunits.

The catalysed reaction is L-glutamyl-tRNA(Gln) + L-glutamine + ATP + H2O = L-glutaminyl-tRNA(Gln) + L-glutamate + ADP + phosphate + H(+). Its function is as follows. Allows the formation of correctly charged Gln-tRNA(Gln) through the transamidation of misacylated Glu-tRNA(Gln) in organisms which lack glutaminyl-tRNA synthetase. The reaction takes place in the presence of glutamine and ATP through an activated gamma-phospho-Glu-tRNA(Gln). The sequence is that of Glutamyl-tRNA(Gln) amidotransferase subunit A from Dehalococcoides mccartyi (strain CBDB1).